The primary structure comprises 303 residues: 2-dehydropantoate 2-reductase (303 aa).

Residues 7-12 (GCGALG), asparagine 98, and alanine 122 each bind NADP(+). Residue asparagine 98 participates in substrate binding. Catalysis depends on lysine 176, which acts as the Proton donor. Positions 180, 184, 194, and 244 each coordinate substrate. Residue glutamate 256 coordinates NADP(+).

This sequence belongs to the ketopantoate reductase family. In terms of assembly, monomer.

Its subcellular location is the cytoplasm. It carries out the reaction (R)-pantoate + NADP(+) = 2-dehydropantoate + NADPH + H(+). It functions in the pathway cofactor biosynthesis; (R)-pantothenate biosynthesis; (R)-pantoate from 3-methyl-2-oxobutanoate: step 2/2. Its function is as follows. Catalyzes the NADPH-dependent reduction of ketopantoate into pantoic acid. The chain is 2-dehydropantoate 2-reductase (panE) from Shigella flexneri.